The sequence spans 87 residues: Large ribosomal subunit protein bL27 (87 aa).

Residues 1 to 24 (MATKKAGGSSRNGRDSAGRRLGVK) form a disordered region.

This sequence belongs to the bacterial ribosomal protein bL27 family.

The polypeptide is Large ribosomal subunit protein bL27 (Rickettsia massiliae (strain Mtu5)).